Consider the following 335-residue polypeptide: Selenide, water dikinase (335 aa).

Sec7 is an active-site residue. Position 7 (Sec7) is a non-standard amino acid, selenocysteine. ATP contacts are provided by residues Lys10 and 36–38; that span reads LGD. Residue Asp39 participates in Mg(2+) binding. Residues Asp55, Asp78, and 126 to 128 each bind ATP; that span reads GHT. Asp78 lines the Mg(2+) pocket. Residue Asp232 participates in Mg(2+) binding.

This sequence belongs to the selenophosphate synthase 1 family. Class I subfamily. In terms of assembly, homodimer. Mg(2+) serves as cofactor.

It catalyses the reaction hydrogenselenide + ATP + H2O = selenophosphate + AMP + phosphate + 2 H(+). In terms of biological role, synthesizes selenophosphate from selenide and ATP. The sequence is that of Selenide, water dikinase from Methanococcus maripaludis (strain DSM 14266 / JCM 13030 / NBRC 101832 / S2 / LL).